A 99-amino-acid chain; its full sequence is Co-chaperonin GroES (99 aa).

This sequence belongs to the GroES chaperonin family. In terms of assembly, heptamer of 7 subunits arranged in a ring. Interacts with the chaperonin GroEL.

The protein resides in the cytoplasm. Its function is as follows. Together with the chaperonin GroEL, plays an essential role in assisting protein folding. The GroEL-GroES system forms a nano-cage that allows encapsulation of the non-native substrate proteins and provides a physical environment optimized to promote and accelerate protein folding. GroES binds to the apical surface of the GroEL ring, thereby capping the opening of the GroEL channel. The chain is Co-chaperonin GroES from Methylacidiphilum infernorum (isolate V4) (Methylokorus infernorum (strain V4)).